We begin with the raw amino-acid sequence, 284 residues long: Diaminopimelate epimerase (284 aa).

Residues asparagine 13 and asparagine 66 each contribute to the substrate site. Cysteine 75 serves as the catalytic Proton donor. Substrate contacts are provided by residues 76–77 (GN), asparagine 166, asparagine 199, and 217–218 (ER). Residue cysteine 226 is the Proton acceptor of the active site. Position 227 to 228 (227 to 228 (GT)) interacts with substrate.

The protein belongs to the diaminopimelate epimerase family. As to quaternary structure, homodimer.

The protein resides in the cytoplasm. The enzyme catalyses (2S,6S)-2,6-diaminopimelate = meso-2,6-diaminopimelate. The protein operates within amino-acid biosynthesis; L-lysine biosynthesis via DAP pathway; DL-2,6-diaminopimelate from LL-2,6-diaminopimelate: step 1/1. Catalyzes the stereoinversion of LL-2,6-diaminopimelate (L,L-DAP) to meso-diaminopimelate (meso-DAP), a precursor of L-lysine and an essential component of the bacterial peptidoglycan. The polypeptide is Diaminopimelate epimerase (Halothermothrix orenii (strain H 168 / OCM 544 / DSM 9562)).